The chain runs to 387 residues: DNA-damage-repair/toleration protein 111 (387 aa).

Residues 1–213 (MLGGLYGDLP…TSGLGVGAGG (213 aa)) are disordered. Positions 19 to 29 (SGNSSSVWSSS) are enriched in low complexity. The span at 103–158 (DPARPNDYEEYKREKKRKATEAEMKREMDKRRQEDEERDKREREEREKERERDNSD) shows a compositional bias: basic and acidic residues. Residues 214–260 (QMTAAQRMMAKMGWKQGQGLGKSEQGITTPLMAKKTDRRAGVIVNAS) enclose the G-patch domain. The 87-residue stretch at 283-369 (RVLLLRNMVG…RTVRATFYDE (87 aa)) folds into the RRM domain.

In terms of assembly, component of the SWAP1-SFPS-RRC1 splicing factor complex which modulates pre-mRNA splicing to promote photomorphogenesis. Interacts with SWAP1 in a light-independent manner. Associates with the photoreceptor phytochrome B (phyB) in nuclear photobodies upon response to red light. Binds to the splicing factor 1 SF1, involved in 3' splicing site recognition. Expressed ubiquitously with highest levels in dry seeds and in cells surrounding the base of trichomes and guard cells.

It is found in the nucleus. The protein localises to the nucleus speckle. As a member of the SWAP1-SFPS-RRC1 splicing factor complex, modulates photomorphogenesis by regulating the gene expression and pre-messenger RNA (mRNA) alternative splicing of a large number of genes, including those involved in plant responses to light signaling, probably by helping in the 3' splice site determination. Associates with and regulates EARLY FLOWERING 3 (ELF3) mRNA processing, a key component of the circadian clock also involved in photomorphogenesis. Required for light-regulated (red, far-red and blue lights) photomorphogenesis in a PHYB- and PHYTOCHROME INTERACTING FACTORS- (PIFs) dependent manner. Promotes flowering under both short (SD) and long days (LD). Controls abscisic acid (ABA) sensitivity during seed development, stomatal responsiveness and germination by monitoring ABI3 splicing, upstream of the splicing factor SUPPRESSOR OF ABI3-ABI5. Seems to be involved in the resistance to UV light and chemical DNA-damaging agents. The polypeptide is DNA-damage-repair/toleration protein 111 (Arabidopsis thaliana (Mouse-ear cress)).